The following is a 324-amino-acid chain: Proto-oncogene Mas (324 aa).

Residues 1–35 lie on the Extracellular side of the membrane; it reads MDQSNMTSLAEEKAMNTSSRNASLGSSHPPIPIVH. Residues Asn5, Asn16, and Asn21 are each glycosylated (N-linked (GlcNAc...) asparagine). The helical transmembrane segment at 36–60 threads the bilayer; the sequence is WVIMSISPLGFVENGILLWFLCFRM. Residues 61–64 lie on the Cytoplasmic side of the membrane; that stretch reads RRNP. The helical transmembrane segment at 65-86 threads the bilayer; it reads FTVYITHLSIADISLLFCIFIL. The Extracellular portion of the chain corresponds to 87–103; that stretch reads SIDYALDYELSSGHHYT. A helical membrane pass occupies residues 104–127; sequence IVTLSVTFLFGYNTGLYLLTAISV. The Cytoplasmic portion of the chain corresponds to 128–148; it reads ERCLSVLYPIWYRCHRPKHQS. A helical membrane pass occupies residues 149–171; that stretch reads AFVCALLWALSCLVTTMEYVMCI. The Extracellular portion of the chain corresponds to 172–184; sequence DSGEESHSRSDCR. Residues 185–205 form a helical membrane-spanning segment; the sequence is AVIIFIAILSFLVFTPLMLVS. Topologically, residues 206–223 are cytoplasmic; it reads STILVVKIRKNTWASHSS. The helical transmembrane segment at 224–244 threads the bilayer; it reads KLYIVIMVTIIIFLIFAMPMR. The Extracellular segment spans residues 245 to 262; the sequence is VLYLLYYEYWSAFGNLHN. Residues 263–283 form a helical membrane-spanning segment; it reads ISLLFSTINSSANPFIYFFVG. Residues 284-324 lie on the Cytoplasmic side of the membrane; it reads SSKKKRFRESLKVVLTRAFKDEMQPRRQEGNGNTVSIETVV.

It belongs to the G-protein coupled receptor 1 family. Interacts with AGTR1. Interacts with FLNA (via filamin repeat 21); increases PKA-mediated phosphorylation of FLNA.

The protein localises to the cell membrane. Its function is as follows. Acts specifically as a functional antagonist of AGTR1 (angiotensin-2 type 1 receptor), although it up-regulates AGTR1 receptor levels. Positive regulation of AGTR1 levels occurs through activation of the G-proteins GNA11 and GNAQ, and stimulation of the protein kinase C signaling cascade. The antagonist effect on AGTR1 function is probably due to AGTR1 being physically altered by MAS1. Receptor for angiotensin 1-7. This is Proto-oncogene Mas (Mas1) from Mus musculus (Mouse).